We begin with the raw amino-acid sequence, 168 residues long: Phosphopantetheine adenylyltransferase (168 aa).

Threonine 13 is a binding site for substrate. ATP contacts are provided by residues 13-14 (TF) and histidine 21. Residues lysine 45, leucine 78, and arginine 92 each contribute to the substrate site. Residues 93-95 (GLR), glutamate 103, and 128-134 (TQFISSS) contribute to the ATP site.

This sequence belongs to the bacterial CoaD family. Homohexamer. The cofactor is Mg(2+).

It is found in the cytoplasm. It catalyses the reaction (R)-4'-phosphopantetheine + ATP + H(+) = 3'-dephospho-CoA + diphosphate. Its pathway is cofactor biosynthesis; coenzyme A biosynthesis; CoA from (R)-pantothenate: step 4/5. In terms of biological role, reversibly transfers an adenylyl group from ATP to 4'-phosphopantetheine, yielding dephospho-CoA (dPCoA) and pyrophosphate. The sequence is that of Phosphopantetheine adenylyltransferase from Wolbachia pipientis wMel.